Here is a 361-residue protein sequence, read N- to C-terminus: Versatile peroxidase VPL2 (361 aa).

The signal sequence occupies residues 1–22; that stretch reads MSFKTLSALALALGAAVQFASA. Positions 23 to 30 are excised as a propeptide; it reads AVPLVQKR. 4 disulfides stabilise this stretch: Cys33-Cys45, Cys44-Cys308, Cys64-Cys144, and Cys272-Cys337. 2 residues coordinate Mn(2+): Glu66 and Glu70. Residue His77 is the Proton acceptor of the active site. Ca(2+) is bound by residues Asp78, Gly90, Asp92, and Ser94. An N-linked (GlcNAc...) asparagine glycan is attached at Asn126. Trp194 serves as the catalytic Tryptophan radical intermediate. His199 provides a ligand contact to heme b. Ser200 provides a ligand contact to Ca(2+). Residue 203–207 coordinates heme b; the sequence is AADKV. Position 205 (Asp205) interacts with Mn(2+). Ca(2+) is bound by residues Asp217, Thr219, Val222, and Asp224.

It belongs to the peroxidase family. Ligninase subfamily. Requires heme b as cofactor. Ca(2+) is required as a cofactor.

It localises to the secreted. It carries out the reaction 1-(4-hydroxy-3-methoxyphenyl)-2-(2-methoxyphenoxy)propane-1,3-diol + H2O2 = guaiacol + vanillin + glycolaldehyde + H2O. The catalysed reaction is 2 Mn(2+) + H2O2 + 2 H(+) = 2 Mn(3+) + 2 H2O. A versatile ligninolytic peroxidase that combines the substrate specificity characteristics of the two other ligninolytic peroxidases, manganese peroxidase and lignin peroxidase. The chain is Versatile peroxidase VPL2 (vpl2) from Pleurotus eryngii (Boletus of the steppes).